We begin with the raw amino-acid sequence, 131 residues long: Profilin-4 (131 aa).

Residues Cys-13 and Cys-115 are joined by a disulfide bond. Residues 81–97 (VVIRGKKGTGGITIKKT) carry the Involved in PIP2 interaction motif. Thr-111 is subject to Phosphothreonine.

This sequence belongs to the profilin family. In terms of assembly, occurs in many kinds of cells as a complex with monomeric actin in a 1:1 ratio. Phosphorylated by MAP kinases. As to expression, expressed predominantly in endosperm but is also found at low levels in all tissues examined, including mature and germinated pollen.

The protein localises to the cytoplasm. Its subcellular location is the cytoskeleton. Binds to actin and affects the structure of the cytoskeleton. At high concentrations, profilin prevents the polymerization of actin, whereas it enhances it at low concentrations. By binding to PIP2, it inhibits the formation of IP3 and DG. Has a high affinity for poly-proline. This is Profilin-4 (PRO4) from Zea mays (Maize).